The following is a 453-amino-acid chain: Chromosomal replication initiator protein DnaA (453 aa).

The domain I, interacts with DnaA modulators stretch occupies residues 1–73 (MSKEEIWDKV…ADLIEKAIGT (73 aa)). Positions 73–114 (TKLMPNFVIQEDLTEDKQVKDSAKAKSEAKPDVQAPQNSSED) are domain II. The segment covering 91 to 103 (VKDSAKAKSEAKP) has biased composition (basic and acidic residues). The tract at residues 91 to 113 (VKDSAKAKSEAKPDVQAPQNSSE) is disordered. Positions 115–331 (QFNVHNTFET…GALTRVIAYS (217 aa)) are domain III, AAA+ region. Residues G159, G161, K162, and T163 each coordinate ATP. Residues 332–453 (RLQNEAITTE…ENLEKEIRNQ (122 aa)) form a domain IV, binds dsDNA region.

It belongs to the DnaA family. In terms of assembly, oligomerizes as a right-handed, spiral filament on DNA at oriC.

The protein localises to the cytoplasm. In terms of biological role, plays an essential role in the initiation and regulation of chromosomal replication. ATP-DnaA binds to the origin of replication (oriC) to initiate formation of the DNA replication initiation complex once per cell cycle. Binds the DnaA box (a 9 base pair repeat at the origin) and separates the double-stranded (ds)DNA. Forms a right-handed helical filament on oriC DNA; dsDNA binds to the exterior of the filament while single-stranded (ss)DNA is stabiized in the filament's interior. The ATP-DnaA-oriC complex binds and stabilizes one strand of the AT-rich DNA unwinding element (DUE), permitting loading of DNA polymerase. After initiation quickly degrades to an ADP-DnaA complex that is not apt for DNA replication. Binds acidic phospholipids. In Staphylococcus carnosus (strain TM300), this protein is Chromosomal replication initiator protein DnaA.